A 452-amino-acid polypeptide reads, in one-letter code: Protein mab-21-like 4 (452 aa).

The chain is Protein mab-21-like 4 (Mab21l4) from Mus musculus (Mouse).